An 88-amino-acid chain; its full sequence is Small ribosomal subunit protein uS15 (88 aa).

The segment covering 1-12 has biased composition (basic and acidic residues); that stretch reads MITQEEQQKIID. Residues 1-24 are disordered; that stretch reads MITQEEQQKIIDRFGNGPNDTGTP.

Belongs to the universal ribosomal protein uS15 family. Part of the 30S ribosomal subunit. Forms a bridge to the 50S subunit in the 70S ribosome, contacting the 23S rRNA.

In terms of biological role, one of the primary rRNA binding proteins, it binds directly to 16S rRNA where it helps nucleate assembly of the platform of the 30S subunit by binding and bridging several RNA helices of the 16S rRNA. Functionally, forms an intersubunit bridge (bridge B4) with the 23S rRNA of the 50S subunit in the ribosome. The polypeptide is Small ribosomal subunit protein uS15 (Salinibacter ruber (strain DSM 13855 / M31)).